Consider the following 595-residue polypeptide: UvrABC system protein C (595 aa).

The GIY-YIG domain maps to 14 to 91; it reads NNPGCYLHKD…IQENMPKFNI (78 aa). Residues 196–231 form the UVR domain; that stretch reads DKIVNQLKAKMKDMSDQMEFERAAEYRDLIEAVSTL.

Belongs to the UvrC family. Interacts with UvrB in an incision complex.

The protein resides in the cytoplasm. Its function is as follows. The UvrABC repair system catalyzes the recognition and processing of DNA lesions. UvrC both incises the 5' and 3' sides of the lesion. The N-terminal half is responsible for the 3' incision and the C-terminal half is responsible for the 5' incision. In Streptococcus thermophilus (strain ATCC BAA-250 / LMG 18311), this protein is UvrABC system protein C.